The sequence spans 943 residues: Isoleucine--tRNA ligase (943 aa).

The 'HIGH' region motif lies at 59–69; it reads PYANGRIHLGH. Glutamate 577 lines the L-isoleucyl-5'-AMP pocket. Positions 618–622 match the 'KMSKS' region motif; sequence KMSKS. Lysine 621 is an ATP binding site. Cysteine 906, cysteine 909, cysteine 926, and cysteine 929 together coordinate Zn(2+).

This sequence belongs to the class-I aminoacyl-tRNA synthetase family. IleS type 1 subfamily. In terms of assembly, monomer. It depends on Zn(2+) as a cofactor.

The protein localises to the cytoplasm. The catalysed reaction is tRNA(Ile) + L-isoleucine + ATP = L-isoleucyl-tRNA(Ile) + AMP + diphosphate. In terms of biological role, catalyzes the attachment of isoleucine to tRNA(Ile). As IleRS can inadvertently accommodate and process structurally similar amino acids such as valine, to avoid such errors it has two additional distinct tRNA(Ile)-dependent editing activities. One activity is designated as 'pretransfer' editing and involves the hydrolysis of activated Val-AMP. The other activity is designated 'posttransfer' editing and involves deacylation of mischarged Val-tRNA(Ile). In Stenotrophomonas maltophilia (strain K279a), this protein is Isoleucine--tRNA ligase.